The following is a 368-amino-acid chain: Xaa-Pro dipeptidase (368 aa).

Mn(2+) is bound by residues D223, D234, H298, E327, and E341.

Belongs to the peptidase M24B family. It depends on Mn(2+) as a cofactor.

It localises to the cytoplasm. The enzyme catalyses Xaa-L-Pro dipeptide + H2O = an L-alpha-amino acid + L-proline. This Lactobacillus helveticus (Lactobacillus suntoryeus) protein is Xaa-Pro dipeptidase (pepQ).